The chain runs to 70 residues: MAKCQVCGKGPVTGKNVSHSNRRTNRWFKPNLQKVRVITDEGKIKRMWVCTDCLSAGKVKRYVSTKVEAQ.

The protein belongs to the bacterial ribosomal protein bL28 family.

The chain is Large ribosomal subunit protein bL28 from Thermosipho melanesiensis (strain DSM 12029 / CIP 104789 / BI429).